Here is a 295-residue protein sequence, read N- to C-terminus: Protoheme IX farnesyltransferase (295 aa).

9 consecutive transmembrane segments (helical) span residues 8–28, 35–55, 74–94, 98–118, 132–152, 162–182, 208–228, 233–253, and 264–284; these read VTKP…FLLA, YPLF…GCVF, VLVK…VLGI, LLLY…GFVI, VYGT…GYCA, LILL…IAIF, ITLY…SGYA, LVVA…GYKA, and FVFS…DFNV.

The protein belongs to the UbiA prenyltransferase family. Protoheme IX farnesyltransferase subfamily.

The protein localises to the cell inner membrane. The enzyme catalyses heme b + (2E,6E)-farnesyl diphosphate + H2O = Fe(II)-heme o + diphosphate. The protein operates within porphyrin-containing compound metabolism; heme O biosynthesis; heme O from protoheme: step 1/1. Functionally, converts heme B (protoheme IX) to heme O by substitution of the vinyl group on carbon 2 of heme B porphyrin ring with a hydroxyethyl farnesyl side group. The chain is Protoheme IX farnesyltransferase from Yersinia pseudotuberculosis serotype O:1b (strain IP 31758).